A 389-amino-acid polypeptide reads, in one-letter code: Chalcone synthase 4 (389 aa).

The active site involves Cys164.

It belongs to the thiolase-like superfamily. Chalcone/stilbene synthases family.

The catalysed reaction is (E)-4-coumaroyl-CoA + 3 malonyl-CoA + 3 H(+) = 2',4,4',6'-tetrahydroxychalcone + 3 CO2 + 4 CoA. The protein operates within secondary metabolite biosynthesis; flavonoid biosynthesis. In terms of biological role, the primary product of this enzyme is 4,2',4',6'-tetrahydroxychalcone (also termed naringenin-chalcone or chalcone) which can under specific conditions spontaneously isomerize into naringenin. The sequence is that of Chalcone synthase 4 (CHS4) from Medicago sativa (Alfalfa).